A 91-amino-acid polypeptide reads, in one-letter code: Putative defective replication initiation protein (91 aa).

In Escherichia coli (strain K12), this protein is Putative defective replication initiation protein (repA1).